The primary structure comprises 381 residues: Cytosolic acyl coenzyme A thioester hydrolase (381 aa).

The HotDog ACOT-type 1 domain occupies 51 to 169 (PGHCIAMGRI…TLWYVPLSLK (119 aa)). Asn67 is an active-site residue. Residues Lys169 and Lys199 each carry the N6-acetyllysine modification. A HotDog ACOT-type 2 domain is found at 225 to 339 (SYSQSSLIHL…FFTYVSLNQE (115 aa)). Asp256 is a catalytic residue. Lys284 carries the N6-acetyllysine modification. The disordered stretch occupies residues 343–381 (LPVPQLVPETEDEKKRFEEGKGRYLQMKAKRQGHTEPQP). Residues 354–364 (DEKKRFEEGKG) are compositionally biased toward basic and acidic residues.

As to quaternary structure, homohexamer. In terms of processing, the N-terminus is blocked. As to expression, isoform 1 is expressed constitutively in brain and testis. Isoform 2 is induced in liver by treatment with the peroxisome proliferator.

Its subcellular location is the cytoplasm. The protein resides in the cytosol. The enzyme catalyses hexadecanoyl-CoA + H2O = hexadecanoate + CoA + H(+). The catalysed reaction is dodecanoyl-CoA + H2O = dodecanoate + CoA + H(+). It catalyses the reaction tetradecanoyl-CoA + H2O = tetradecanoate + CoA + H(+). It carries out the reaction decanoyl-CoA + H2O = decanoate + CoA + H(+). The enzyme catalyses octanoyl-CoA + H2O = octanoate + CoA + H(+). The catalysed reaction is octadecanoyl-CoA + H2O = octadecanoate + CoA + H(+). It catalyses the reaction (9Z)-octadecenoyl-CoA + H2O = (9Z)-octadecenoate + CoA + H(+). It functions in the pathway lipid metabolism; fatty acid metabolism. Its function is as follows. Catalyzes the hydrolysis of acyl-CoAs into free fatty acids and coenzyme A (CoASH), regulating their respective intracellular levels. Preferentially hydrolyzes palmitoyl-CoA, but has a broad specificity acting on other fatty acyl-CoAs with chain-lengths of C8-C18. May play an important physiological function in brain. The protein is Cytosolic acyl coenzyme A thioester hydrolase (Acot7) of Rattus norvegicus (Rat).